The following is a 528-amino-acid chain: D-3-phosphoglycerate dehydrogenase (528 aa).

Residues 151 to 152 (RI), Asp-171, 230 to 232 (AAR), and Asp-256 each bind NAD(+). Arg-232 is an active-site residue. Glu-261 is an active-site residue. The active-site Proton donor is the His-279. Residue 279–282 (HLGA) coordinates NAD(+). The ACT domain maps to 455–528 (NLVIRYVDQP…ANKLEVVNLS (74 aa)).

Belongs to the D-isomer specific 2-hydroxyacid dehydrogenase family.

It catalyses the reaction (2R)-3-phosphoglycerate + NAD(+) = 3-phosphooxypyruvate + NADH + H(+). The catalysed reaction is (R)-2-hydroxyglutarate + NAD(+) = 2-oxoglutarate + NADH + H(+). Its pathway is amino-acid biosynthesis; L-serine biosynthesis; L-serine from 3-phospho-D-glycerate: step 1/3. Functionally, catalyzes the reversible oxidation of 3-phospho-D-glycerate to 3-phosphonooxypyruvate, the first step of the phosphorylated L-serine biosynthesis pathway. Also catalyzes the reversible oxidation of 2-hydroxyglutarate to 2-oxoglutarate. This chain is D-3-phosphoglycerate dehydrogenase (serA), found in Mycobacterium leprae (strain TN).